A 968-amino-acid polypeptide reads, in one-letter code: MPFTLGQRWISDTESELGLGTVVAVDARTVTLLFPSTGENRLYARSDSPVTRVMFNPGDTITSHDGWQMQVEEVKEENGLLTYIGTRLDTEESGVALREVFLDSKLVFSKPQDRLFAGQIDRMDRFALRYRARKYSSEQFRMPYSGLRGQRTSLIPHQLNIAHDVGRRHAPRVLLADEVGLGKTIEAGMILHQQLLSGAAERVLIIVPETLQHQWLVEMLRRFNLRFALFDDERYAEAQHDAYNPFDTEQLVICSLDFARRSKQRLEHLCEAEWDLLVVDEAHHLVWSEDAPSREYQAIEQLAEHVPGVLLLTATPEQLGMESHFARLRLLDPNRFHDFAQFVEEQKNYRPVADAVAMLLAGNKLSNDELNMLGEMIGEQDIEPLLQAANSDSEDAQSARQELVSMLMDRHGTSRVLFRNTRNGVKGFPKRELHTIKLPLPTQYQTAIKVSGIMGARKSAEDRARDMLYPERIYQEFEGDNATWWNFDPRVEWLMGYLTSHRSQKVLVICAKAATALQLEQVLREREGIRAAVFHEGMSIIERDRAAAWFAEEDTGAQVLLCSEIGSEGRNFQFASHMVMFDLPFNPDLLEQRIGRLDRIGQAHDIQIHVPYLEKTAQSVLVRWYHEGLDAFEHTCPTGRTIYDSVYNDLINYLASPDQTEGFDDLIKNCREQHEALKAQLEQGRDRLLEIHSNGGEKAQALAESIEEQDDDTNLIAFAMNLFDIIGINQDDRGDNMIVLTPSDHMLVPDFPGLSEDGITITFDREVALAREDTQFITWEHPLIRNGLDLILSGDTGSSTISLLKNKALPVGTLLVELIYVVEAQAPKQLQLNRFLPPTPVRMLLDKNGNNLAAQVEFETFNRQLNAVNRHTGSKLVNAVQQDVHAILQLGEAQIEKSARALIDAARNEADEKLSAELSRLEALRAVNPNIRDDELTAIESNRQQVMESLDQAGWRLDALRLIVVTHQ.

In terms of domain architecture, Helicase ATP-binding spans 164-334 (DVGRRHAPRV…FARLRLLDPN (171 aa)). An ATP-binding site is contributed by 177 to 184 (DEVGLGKT). Positions 280–283 (DEAH) match the DEAH box motif. The Helicase C-terminal domain maps to 490-662 (RVEWLMGYLT…YLASPDQTEG (173 aa)).

This sequence belongs to the SNF2/RAD54 helicase family. RapA subfamily. As to quaternary structure, interacts with the RNAP. Has a higher affinity for the core RNAP than for the holoenzyme. Its ATPase activity is stimulated by binding to RNAP.

In terms of biological role, transcription regulator that activates transcription by stimulating RNA polymerase (RNAP) recycling in case of stress conditions such as supercoiled DNA or high salt concentrations. Probably acts by releasing the RNAP, when it is trapped or immobilized on tightly supercoiled DNA. Does not activate transcription on linear DNA. Probably not involved in DNA repair. This is RNA polymerase-associated protein RapA from Escherichia coli O1:K1 / APEC.